The primary structure comprises 320 residues: tRNA U34 carboxymethyltransferase (320 aa).

Carboxy-S-adenosyl-L-methionine-binding positions include Lys87, Trp101, Lys106, Gly126, 148 to 150 (EPS), 176 to 177 (VE), Met192, Tyr196, and Arg311.

It belongs to the class I-like SAM-binding methyltransferase superfamily. CmoB family. Homotetramer.

The catalysed reaction is carboxy-S-adenosyl-L-methionine + 5-hydroxyuridine(34) in tRNA = 5-carboxymethoxyuridine(34) in tRNA + S-adenosyl-L-homocysteine + H(+). In terms of biological role, catalyzes carboxymethyl transfer from carboxy-S-adenosyl-L-methionine (Cx-SAM) to 5-hydroxyuridine (ho5U) to form 5-carboxymethoxyuridine (cmo5U) at position 34 in tRNAs. This chain is tRNA U34 carboxymethyltransferase, found in Desulfotalea psychrophila (strain LSv54 / DSM 12343).